We begin with the raw amino-acid sequence, 322 residues long: Manganese-dependent ADP-ribose/CDP-alcohol diphosphatase (322 aa).

Zn(2+) contacts are provided by aspartate 13, glutamine 15, aspartate 60, asparagine 96, histidine 228, histidine 265, and histidine 267.

This sequence belongs to the ADPRibase-Mn family. Monomer. Requires Mg(2+) as cofactor.

It catalyses the reaction CDP-choline + H2O = phosphocholine + CMP + 2 H(+). The catalysed reaction is ADP-D-ribose + H2O = D-ribose 5-phosphate + AMP + 2 H(+). The enzyme catalyses CDP-glycerol + H2O = sn-glycerol 3-phosphate + CMP + 2 H(+). Functionally, hydrolyzes ADP-ribose, IDP-ribose, CDP-glycerol, CDP-choline and CDP-ethanolamine, but not other non-reducing ADP-sugars or CDP-glucose. The protein is Manganese-dependent ADP-ribose/CDP-alcohol diphosphatase (adprm) of Danio rerio (Zebrafish).